We begin with the raw amino-acid sequence, 261 residues long: 14-3-3-like protein GF14-12 (261 aa).

Belongs to the 14-3-3 family.

Functionally, is associated with a DNA binding complex to bind to the G box, a well-characterized cis-acting DNA regulatory element found in plant genes. The protein is 14-3-3-like protein GF14-12 (GRF2) of Zea mays (Maize).